Here is a 245-residue protein sequence, read N- to C-terminus: 4-hydroxy-tetrahydrodipicolinate reductase (245 aa).

Residues Gly-7 to Val-12, Gly-75 to Thr-77, and Ala-102 to Phe-105 each bind NAD(+). Residue His-132 is the Proton donor/acceptor of the active site. Position 133 (His-133) interacts with (S)-2,3,4,5-tetrahydrodipicolinate. Catalysis depends on Lys-136, which acts as the Proton donor. Gly-142 to Thr-143 is a binding site for (S)-2,3,4,5-tetrahydrodipicolinate.

This sequence belongs to the DapB family.

The protein resides in the cytoplasm. The catalysed reaction is (S)-2,3,4,5-tetrahydrodipicolinate + NAD(+) + H2O = (2S,4S)-4-hydroxy-2,3,4,5-tetrahydrodipicolinate + NADH + H(+). The enzyme catalyses (S)-2,3,4,5-tetrahydrodipicolinate + NADP(+) + H2O = (2S,4S)-4-hydroxy-2,3,4,5-tetrahydrodipicolinate + NADPH + H(+). It participates in amino-acid biosynthesis; L-lysine biosynthesis via DAP pathway; (S)-tetrahydrodipicolinate from L-aspartate: step 4/4. Functionally, catalyzes the conversion of 4-hydroxy-tetrahydrodipicolinate (HTPA) to tetrahydrodipicolinate. The chain is 4-hydroxy-tetrahydrodipicolinate reductase from Mycobacterium ulcerans (strain Agy99).